A 349-amino-acid polypeptide reads, in one-letter code: Ribosomal RNA large subunit methyltransferase M (349 aa).

Residues 216-219 (APGG), D235, D255, and D271 contribute to the S-adenosyl-L-methionine site. K300 serves as the catalytic Proton acceptor.

The protein belongs to the class I-like SAM-binding methyltransferase superfamily. RNA methyltransferase RlmE family. RlmM subfamily. Monomer.

The protein localises to the cytoplasm. The catalysed reaction is cytidine(2498) in 23S rRNA + S-adenosyl-L-methionine = 2'-O-methylcytidine(2498) in 23S rRNA + S-adenosyl-L-homocysteine + H(+). Functionally, catalyzes the 2'-O-methylation at nucleotide C2498 in 23S rRNA. The chain is Ribosomal RNA large subunit methyltransferase M from Saccharophagus degradans (strain 2-40 / ATCC 43961 / DSM 17024).